The sequence spans 470 residues: mRNA export factor ICP27 homolog (470 aa).

Disordered stretches follow at residues 1–31 (MALS…TGGD) and 62–204 (VGDP…DRLN). The segment covering 71-85 (VSFSASPQRAQPSNP) has biased composition (polar residues). 2 stretches are compositionally biased toward basic residues: residues 94 to 107 (HGRR…RRNN) and 178 to 187 (RVHRNRRRGN). 4 residues coordinate Zn(2+): C359, H437, C441, and C446. A CHC2-type zinc finger spans residues 359–446 (CYLSSSGSPT…HKRRCKADTC (88 aa)).

Belongs to the HHV-1 ICP27 protein family. In terms of assembly, homodimer. Homodimerization is required for transactivation. Associates in a complex with RNA, and host export factors NXF1/TAP and ALYREF; these interactions allow nuclear export of viral transcripts. Interacts with three host shuttling SR proteins SRSF1, SRSF3 and SRSF7. Interacts with host SRPK1. Interacts with IE62; this interaction enhances IE62 transactivation.

Its subcellular location is the host cytoplasm. The protein localises to the host nucleus. Functionally, multifunctional regulator of the expression of viral genes that mediates nuclear export of viral intronless mRNAs. This immediate early (EI) protein promotes the nuclear export of viral intronless mRNAs by interacting with mRNAs and host NXF1/TAP. In Equine herpesvirus 1 (strain Ab4p) (EHV-1), this protein is mRNA export factor ICP27 homolog.